The following is a 349-amino-acid chain: Probable myosin light chain kinase DDB_G0275057 (349 aa).

The segment at M1–A33 is disordered. Over residues T16–A33 the composition is skewed to low complexity. Residues Y56–L313 form the Protein kinase domain. Residues L62–V70 and K85 contribute to the ATP site. Residue D178 is the Proton acceptor of the active site.

Belongs to the protein kinase superfamily. CAMK Ser/Thr protein kinase family. CaMK subfamily.

It catalyses the reaction L-seryl-[myosin light chain] + ATP = O-phospho-L-seryl-[myosin light chain] + ADP + H(+). The catalysed reaction is L-threonyl-[myosin light chain] + ATP = O-phospho-L-threonyl-[myosin light chain] + ADP + H(+). With respect to regulation, does not have a calmodulin-binding domain. May phosphorylate a specific serine in the N-terminus of a myosin light chain. This is Probable myosin light chain kinase DDB_G0275057 from Dictyostelium discoideum (Social amoeba).